The sequence spans 388 residues: MNDFHRDTWAEVDLDAIYDNVENLRRLLPDDTHIMAVVKANAYGHGDVQVARTALEAGASRLAVAFLDEALALREKGIEAPILVLGASRPADAALAAQQRIALTVFRSDWLEEASALYSGPFPIHFHLKMDTGMGRLGVKDEEETKRIVALIERHPHFVLEGLYTHFATADEVNTDYFSYQYTRFLHMLEWLPSRPPLVHCANSAASLRFPDRTFNMVRFGIAMYGLAPSPGIKPLLPYPLKEAFSLHSRLVHVKKLQPGEKVSYGATYTAQTEEWIGTIPIGYADGWLRRLQHFHVLVDGQKAPIVGRICMDQCMIRLPGPLPVGTKVTLIGRQGDEVISIDDVARHLETINYEVPCTISYRVPRIFFRHKRIMEVRNAIGRGESSA.

Catalysis depends on Lys-39, which acts as the Proton acceptor; specific for D-alanine. At Lys-39 the chain carries N6-(pyridoxal phosphate)lysine. Lys-129 carries the N6-carboxylysine modification. Arg-136 provides a ligand contact to substrate. Tyr-265 (proton acceptor; specific for L-alanine) is an active-site residue. Met-312 contributes to the substrate binding site.

This sequence belongs to the alanine racemase family. In terms of assembly, homodimer. Requires pyridoxal 5'-phosphate as cofactor.

It catalyses the reaction L-alanine = D-alanine. It participates in amino-acid biosynthesis; D-alanine biosynthesis; D-alanine from L-alanine: step 1/1. Its activity is regulated as follows. Inhibited by acetate and propionate. Irreversibly inhibited by cycloserine. Functionally, catalyzes the interconversion of L-alanine and D-alanine. Also weakly active on serine. This chain is Alanine racemase (alr), found in Geobacillus stearothermophilus (Bacillus stearothermophilus).